Here is a 335-residue protein sequence, read N- to C-terminus: Glyceraldehyde-3-phosphate dehydrogenase (335 aa).

NAD(+)-binding positions include 10-11, D33, K77, and T119; that span reads RI. D-glyceraldehyde 3-phosphate-binding positions include 150-152, T181, 210-211, and R233; these read SCT and TG. The active-site Nucleophile is C151. N315 is an NAD(+) binding site.

Belongs to the glyceraldehyde-3-phosphate dehydrogenase family. Homotetramer.

The protein resides in the cytoplasm. It catalyses the reaction D-glyceraldehyde 3-phosphate + phosphate + NAD(+) = (2R)-3-phospho-glyceroyl phosphate + NADH + H(+). Its pathway is carbohydrate degradation; glycolysis; pyruvate from D-glyceraldehyde 3-phosphate: step 1/5. Catalyzes the oxidative phosphorylation of glyceraldehyde 3-phosphate (G3P) to 1,3-bisphosphoglycerate (BPG) using the cofactor NAD. The first reaction step involves the formation of a hemiacetal intermediate between G3P and a cysteine residue, and this hemiacetal intermediate is then oxidized to a thioester, with concomitant reduction of NAD to NADH. The reduced NADH is then exchanged with the second NAD, and the thioester is attacked by a nucleophilic inorganic phosphate to produce BPG. This chain is Glyceraldehyde-3-phosphate dehydrogenase (gap), found in Chlamydia muridarum (strain MoPn / Nigg).